The primary structure comprises 381 residues: tRNA-specific 2-thiouridylase MnmA (381 aa).

ATP contacts are provided by residues 9 to 16 (GMSGGVDS) and Met-35. Positions 95 to 97 (NPD) are interaction with target base in tRNA. The Nucleophile role is filled by Cys-100. A disulfide bridge connects residues Cys-100 and Cys-196. Gly-124 is an ATP binding site. Residues 146–148 (KDQ) form an interaction with tRNA region. Cys-196 acts as the Cysteine persulfide intermediate in catalysis. Residues 308–309 (RY) are interaction with tRNA.

It belongs to the MnmA/TRMU family.

Its subcellular location is the cytoplasm. The catalysed reaction is S-sulfanyl-L-cysteinyl-[protein] + uridine(34) in tRNA + AH2 + ATP = 2-thiouridine(34) in tRNA + L-cysteinyl-[protein] + A + AMP + diphosphate + H(+). Its function is as follows. Catalyzes the 2-thiolation of uridine at the wobble position (U34) of tRNA, leading to the formation of s(2)U34. The polypeptide is tRNA-specific 2-thiouridylase MnmA (Burkholderia multivorans (strain ATCC 17616 / 249)).